Reading from the N-terminus, the 122-residue chain is Ribonuclease P protein component 1 (122 aa).

This sequence belongs to the eukaryotic/archaeal RNase P protein component 1 family. As to quaternary structure, consists of a catalytic RNA component and at least 4-5 protein subunits.

The protein localises to the cytoplasm. The enzyme catalyses Endonucleolytic cleavage of RNA, removing 5'-extranucleotides from tRNA precursor.. In terms of biological role, part of ribonuclease P, a protein complex that generates mature tRNA molecules by cleaving their 5'-ends. The protein is Ribonuclease P protein component 1 of Thermococcus sibiricus (strain DSM 12597 / MM 739).